The chain runs to 660 residues: Bifunctional polymyxin resistance protein ArnA (660 aa).

The segment at 1–304 is formyltransferase ArnAFT; sequence MKAVIFAYHD…TLGLVAGACL (304 aa). The Proton donor; for formyltransferase activity role is filled by H104. Residues R114 and 136–140 each bind (6R)-10-formyltetrahydrofolate; that span reads VKRAD. Positions 314–660 are dehydrogenase ArnADH; it reads RRIRVLILGV…RSVDIAERAS (347 aa). NAD(+) contacts are provided by residues D347 and 368–369; that span reads DI. UDP-alpha-D-glucuronate-binding positions include A393, Y398, and 432 to 433; that span reads TS. The active-site Proton acceptor; for decarboxylase activity is the E434. Residues R460, N492, 526–535, and Y613 contribute to the UDP-alpha-D-glucuronate site; that span reads KLIDGGQQKR. The active-site Proton donor; for decarboxylase activity is R619.

The protein in the N-terminal section; belongs to the Fmt family. UDP-L-Ara4N formyltransferase subfamily. It in the C-terminal section; belongs to the NAD(P)-dependent epimerase/dehydratase family. UDP-glucuronic acid decarboxylase subfamily. As to quaternary structure, homohexamer, formed by a dimer of trimers.

The catalysed reaction is UDP-alpha-D-glucuronate + NAD(+) = UDP-beta-L-threo-pentopyranos-4-ulose + CO2 + NADH. It carries out the reaction UDP-4-amino-4-deoxy-beta-L-arabinose + (6R)-10-formyltetrahydrofolate = UDP-4-deoxy-4-formamido-beta-L-arabinose + (6S)-5,6,7,8-tetrahydrofolate + H(+). It participates in nucleotide-sugar biosynthesis; UDP-4-deoxy-4-formamido-beta-L-arabinose biosynthesis; UDP-4-deoxy-4-formamido-beta-L-arabinose from UDP-alpha-D-glucuronate: step 1/3. Its pathway is nucleotide-sugar biosynthesis; UDP-4-deoxy-4-formamido-beta-L-arabinose biosynthesis; UDP-4-deoxy-4-formamido-beta-L-arabinose from UDP-alpha-D-glucuronate: step 3/3. It functions in the pathway bacterial outer membrane biogenesis; lipopolysaccharide biosynthesis. In terms of biological role, bifunctional enzyme that catalyzes the oxidative decarboxylation of UDP-glucuronic acid (UDP-GlcUA) to UDP-4-keto-arabinose (UDP-Ara4O) and the addition of a formyl group to UDP-4-amino-4-deoxy-L-arabinose (UDP-L-Ara4N) to form UDP-L-4-formamido-arabinose (UDP-L-Ara4FN). The modified arabinose is attached to lipid A and is required for resistance to polymyxin and cationic antimicrobial peptides. In Salmonella paratyphi A (strain ATCC 9150 / SARB42), this protein is Bifunctional polymyxin resistance protein ArnA.